Consider the following 407-residue polypeptide: 3-oxoacyl-[acyl-carrier-protein] synthase 1 (407 aa).

A Ketosynthase family 3 (KS3) domain is found at 1–406; it reads MKRVVITGFG…GTNVSLILKK (406 aa). Active-site for beta-ketoacyl synthase activity residues include Cys-164, His-300, and His-336.

This sequence belongs to the thiolase-like superfamily. Beta-ketoacyl-ACP synthases family. In terms of assembly, homodimer.

It localises to the cytoplasm. It carries out the reaction a fatty acyl-[ACP] + malonyl-[ACP] + H(+) = a 3-oxoacyl-[ACP] + holo-[ACP] + CO2. It catalyses the reaction (3Z)-decenoyl-[ACP] + malonyl-[ACP] + H(+) = 3-oxo-(5Z)-dodecenoyl-[ACP] + holo-[ACP] + CO2. It participates in lipid metabolism; fatty acid biosynthesis. In terms of biological role, involved in the type II fatty acid elongation cycle. Catalyzes the elongation of a wide range of acyl-ACP by the addition of two carbons from malonyl-ACP to an acyl acceptor. Can also use unsaturated fatty acids. Catalyzes a key reaction in unsaturated fatty acid (UFA) synthesis, the elongation of the cis-3-decenoyl-ACP produced by FabA. The chain is 3-oxoacyl-[acyl-carrier-protein] synthase 1 (fabB) from Buchnera aphidicola subsp. Schizaphis graminum (strain Sg).